The following is a 340-amino-acid chain: Phosphoribosylformylglycinamidine cyclo-ligase (340 aa).

This sequence belongs to the AIR synthase family.

It localises to the cytoplasm. The enzyme catalyses 2-formamido-N(1)-(5-O-phospho-beta-D-ribosyl)acetamidine + ATP = 5-amino-1-(5-phospho-beta-D-ribosyl)imidazole + ADP + phosphate + H(+). Its pathway is purine metabolism; IMP biosynthesis via de novo pathway; 5-amino-1-(5-phospho-D-ribosyl)imidazole from N(2)-formyl-N(1)-(5-phospho-D-ribosyl)glycinamide: step 2/2. The protein is Phosphoribosylformylglycinamidine cyclo-ligase of Streptococcus uberis (strain ATCC BAA-854 / 0140J).